The sequence spans 596 residues: Aspartate--tRNA(Asp/Asn) ligase (596 aa).

Glu-182 contacts L-aspartate. Residues 206–209 are aspartate; it reads QLFK. L-aspartate is bound at residue Arg-228. ATP-binding positions include 228–230 and Gln-237; that span reads RDE. His-456 contacts L-aspartate. Glu-490 provides a ligand contact to ATP. Arg-497 lines the L-aspartate pocket. Position 542–545 (542–545) interacts with ATP; it reads GLDR.

Belongs to the class-II aminoacyl-tRNA synthetase family. Type 1 subfamily. In terms of assembly, homodimer.

It localises to the cytoplasm. The enzyme catalyses tRNA(Asx) + L-aspartate + ATP = L-aspartyl-tRNA(Asx) + AMP + diphosphate. Its function is as follows. Aspartyl-tRNA synthetase with relaxed tRNA specificity since it is able to aspartylate not only its cognate tRNA(Asp) but also tRNA(Asn). Reaction proceeds in two steps: L-aspartate is first activated by ATP to form Asp-AMP and then transferred to the acceptor end of tRNA(Asp/Asn). The polypeptide is Aspartate--tRNA(Asp/Asn) ligase (Syntrophotalea carbinolica (strain DSM 2380 / NBRC 103641 / GraBd1) (Pelobacter carbinolicus)).